The primary structure comprises 139 residues: Transcription antitermination protein NusB (139 aa).

It belongs to the NusB family.

Functionally, involved in transcription antitermination. Required for transcription of ribosomal RNA (rRNA) genes. Binds specifically to the boxA antiterminator sequence of the ribosomal RNA (rrn) operons. The sequence is that of Transcription antitermination protein NusB from Edwardsiella ictaluri (strain 93-146).